The chain runs to 657 residues: Oleate activated transcription factor 3 (657 aa).

Positions 21-48 (CLNCRRRKTKCDRGKPSCSNCLKLGETC) form a DNA-binding region, zn(2)-C6 fungal-type.

It belongs to the OAF3 family.

The protein resides in the cytoplasm. It is found in the nucleus. Its subcellular location is the mitochondrion. Its function is as follows. Transcriptional inhibitor with a significantly increased number of target genes in response to oleate. This is Oleate activated transcription factor 3 (OAF3) from Kluyveromyces lactis (strain ATCC 8585 / CBS 2359 / DSM 70799 / NBRC 1267 / NRRL Y-1140 / WM37) (Yeast).